We begin with the raw amino-acid sequence, 58 residues long: Large ribosomal subunit protein bL33 (58 aa).

It belongs to the bacterial ribosomal protein bL33 family.

This is Large ribosomal subunit protein bL33 from Brachyspira hyodysenteriae (strain ATCC 49526 / WA1).